The chain runs to 226 residues: Transcription factor bHLH115 (226 aa).

The region spanning 66-117 (TGSNSKACREKQRRDRLNDKFTELSSVLEPGRTPKTDKVAIINDAIRMVNQA) is the bHLH domain.

As to quaternary structure, homodimer. Interacts with BTS and BHLH47/PYE.

Its subcellular location is the nucleus. The sequence is that of Transcription factor bHLH115 (BHLH115) from Arabidopsis thaliana (Mouse-ear cress).